The primary structure comprises 412 residues: Probable beta-1,4-xylosyltransferase IRX10 (412 aa).

Residues 1–21 (MKIHSCLSAILLFLFFSASSA) traverse the membrane as a helical; Signal-anchor for type II membrane protein segment. Over 22–412 (KQNVRTERIS…AGPVADLKPW (391 aa)) the chain is Lumenal. 2 N-linked (GlcNAc...) asparagine glycosylation sites follow: N139 and N400.

Belongs to the glycosyltransferase 47 family. In terms of tissue distribution, limited to xylem cells. Expressed in the root tip, xylem cells of roots, and in the vasculature of roots, cotyledons and leaves.

It localises to the golgi apparatus membrane. In terms of biological role, involved in the synthesis of the hemicellulose glucuronoxylan, a major component of secondary cell walls. Probably involved in the elongation of glucuronoxylan xylosyl backbone, especially in the formation of GlcUA side chain of xylans. The sequence is that of Probable beta-1,4-xylosyltransferase IRX10 (IRX10) from Arabidopsis thaliana (Mouse-ear cress).